Reading from the N-terminus, the 293-residue chain is Energy-coupling factor transporter ATP-binding protein EcfA2 (293 aa).

The region spanning 3–246 is the ABC transporter domain; it reads ITFQKVEHRY…ADELEKIGVD (244 aa). 40–47 is a binding site for ATP; the sequence is GHTGSGKS.

Belongs to the ABC transporter superfamily. Energy-coupling factor EcfA family. Forms a stable energy-coupling factor (ECF) transporter complex composed of 2 membrane-embedded substrate-binding proteins (S component), 2 ATP-binding proteins (A component) and 2 transmembrane proteins (T component).

The protein resides in the cell membrane. In terms of biological role, ATP-binding (A) component of a common energy-coupling factor (ECF) ABC-transporter complex. Unlike classic ABC transporters this ECF transporter provides the energy necessary to transport a number of different substrates. In Bacillus cereus (strain ATCC 10987 / NRS 248), this protein is Energy-coupling factor transporter ATP-binding protein EcfA2.